A 392-amino-acid polypeptide reads, in one-letter code: Cell division protein FtsZ (392 aa).

GTP is bound by residues 24-28 (GGGCN), 111-113 (GTG), Glu142, Arg145, and Asp189.

This sequence belongs to the FtsZ family. As to quaternary structure, homodimer. Polymerizes to form a dynamic ring structure in a strictly GTP-dependent manner. Interacts directly with several other division proteins.

The protein resides in the cytoplasm. In terms of biological role, essential cell division protein that forms a contractile ring structure (Z ring) at the future cell division site. The regulation of the ring assembly controls the timing and the location of cell division. One of the functions of the FtsZ ring is to recruit other cell division proteins to the septum to produce a new cell wall between the dividing cells. Binds GTP and shows GTPase activity. The polypeptide is Cell division protein FtsZ (Neisseria gonorrhoeae).